We begin with the raw amino-acid sequence, 499 residues long: UDP-N-acetylmuramoylalanine--D-glutamate ligase (499 aa).

128–134 contributes to the ATP binding site; sequence GTNGKTT.

This sequence belongs to the MurCDEF family.

The protein localises to the cytoplasm. The enzyme catalyses UDP-N-acetyl-alpha-D-muramoyl-L-alanine + D-glutamate + ATP = UDP-N-acetyl-alpha-D-muramoyl-L-alanyl-D-glutamate + ADP + phosphate + H(+). Its pathway is cell wall biogenesis; peptidoglycan biosynthesis. In terms of biological role, cell wall formation. Catalyzes the addition of glutamate to the nucleotide precursor UDP-N-acetylmuramoyl-L-alanine (UMA). This is UDP-N-acetylmuramoylalanine--D-glutamate ligase from Rhodococcus jostii (strain RHA1).